Here is an 83-residue protein sequence, read N- to C-terminus: Exodeoxyribonuclease 7 small subunit (83 aa).

This sequence belongs to the XseB family. Heterooligomer composed of large and small subunits.

The protein localises to the cytoplasm. The catalysed reaction is Exonucleolytic cleavage in either 5'- to 3'- or 3'- to 5'-direction to yield nucleoside 5'-phosphates.. Its function is as follows. Bidirectionally degrades single-stranded DNA into large acid-insoluble oligonucleotides, which are then degraded further into small acid-soluble oligonucleotides. The polypeptide is Exodeoxyribonuclease 7 small subunit (Afipia carboxidovorans (strain ATCC 49405 / DSM 1227 / KCTC 32145 / OM5) (Oligotropha carboxidovorans)).